Here is a 1247-residue protein sequence, read N- to C-terminus: Structural polyprotein (1247 aa).

The segment at 52–103 is disordered; it reads ALRTVPQKPRRTRKTKKQKQVKQEQQSTRNQKKKAPKQKQTQKKKRPGRRER. 2 stretches are compositionally biased toward basic residues: residues 59–71 and 81–100; these read KPRR…KQKQ and NQKK…RPGR. The tract at residues 86–99 is ribosome-binding; sequence APKQKQTQKKKRPG. An intrachain disulfide couples cysteine 112 to cysteine 127. The 149-residue stretch at 112-260 folds into the Peptidase S3 domain; sequence CIFEVKHEGK…KITPEGSVEW (149 aa). Histidine 138 (charge relay system) is an active-site residue. The tract at residues 154 to 159 is interaction with spike glycoprotein E2; the sequence is KRSSKY. Residues aspartate 160 and serine 212 each act as charge relay system in the active site. The interval 261–273 is functions as an uncleaved signal peptide for the precursor of protein E3/E2; the sequence is SLALPVMCLLANT. Intrachain disulfides connect cysteine 268–cysteine 277, cysteine 282–cysteine 286, cysteine 285–cysteine 317, cysteine 343–cysteine 449, cysteine 346–cysteine 352, cysteine 415–cysteine 429, cysteine 477–cysteine 590, cysteine 525–cysteine 549, and cysteine 527–cysteine 544. N-linked (GlcNAc...) asparagine; by host glycosylation is present at asparagine 272. The Extracellular portion of the chain corresponds to 325-691; that stretch reads NARENFNVYK…YYYELYPTTT (367 aa). The N-linked (GlcNAc...) asparagine; by host glycan is linked to asparagine 587. A helical transmembrane segment spans residues 692-712; the sequence is IAVLAAASIVVASLVSLSLGM. The Cytoplasmic portion of the chain corresponds to 713–747; that stretch reads CICARRRCITPYELTPGATIPFLLGVLCCVKTAKA. The segment at 715-719 is interaction with the capsid protein; that stretch reads CARRR. 3 S-palmitoyl cysteine; by host lipidation sites follow: cysteine 720, cysteine 740, and cysteine 741. The transient transmembrane before p62-6K protein processing stretch occupies residues 720–740; sequence CITPYELTPGATIPFLLGVLC. An intrachain disulfide couples cysteine 720 to cysteine 741. Residues 748-762 are Extracellular-facing; that stretch reads ASYYEAATYLWNEQQ. The chain crosses the membrane as a helical span at residues 763–783; the sequence is PLFWLQLLIPLSAAIVACNCL. The Cytoplasmic segment spans residues 784-787; the sequence is KLLP. A helical membrane pass occupies residues 788–808; that stretch reads CCCKTLTFLAVMSIGARTVSA. Topologically, residues 809 to 1223 are extracellular; the sequence is YEHATVIPNT…AMSWVQKITG (415 aa). Intrachain disulfides connect cysteine 857-cysteine 922, cysteine 870-cysteine 902, cysteine 871-cysteine 904, and cysteine 876-cysteine 886. Residues 892-909 are E1 fusion peptide loop; the sequence is VYPFMWGGAYCFCDAENT. N-linked (GlcNAc...) asparagine; by host glycans are attached at residues asparagine 949 and asparagine 1078. 4 disulfide bridges follow: cysteine 1067–cysteine 1079, cysteine 1109–cysteine 1184, cysteine 1114–cysteine 1188, and cysteine 1136–cysteine 1178. The helical transmembrane segment at 1224 to 1244 threads the bilayer; the sequence is GVGLVVAIAALILIIVLCVSF. A lipid anchor (S-palmitoyl cysteine; by host) is attached at cysteine 1241. At 1245-1247 the chain is on the cytoplasmic side; it reads SRH.

In terms of assembly, homodimer. Homomultimer. Interacts with host karyopherin KPNA4; this interaction allows the nuclear import of the viral capsid protein. Interacts with spike glycoprotein E2. Interacts with host IRAK1; the interaction leads to inhibition of IRAK1-dependent signaling. The precursor of protein E3/E2 and E1 form a heterodimer shortly after synthesis. As to quaternary structure, the precursor of protein E3/E2 and E1 form a heterodimer shortly after synthesis. Processing of the precursor of protein E3/E2 into E2 and E3 results in a heterodimer of the spike glycoproteins E2 and E1. Spike at virion surface are constituted of three E2-E1 heterodimers. After target cell attachment and endocytosis, E1 change conformation to form homotrimers. Interacts with 6K protein. In terms of assembly, interacts with spike glycoprotein E1. Processing of the precursor of protein E3/E2 into E2 and E3 results in a heterodimer of the spike glycoproteins E2 and E1. Spike at virion surface are constituted of a trimer of E2-E1 heterodimers. Interacts with 6K protein. Interacts with host MXRA8; this interaction mediates virus entry. Oligomer. Interacts with spike glycoprotein E1. Interacts with spike glycoprotein E2. In terms of processing, structural polyprotein: Specific enzymatic cleavages in vivo yield mature proteins. Capsid protein is auto-cleaved during polyprotein translation, unmasking a signal peptide at the N-terminus of the precursor of E3/E2. The remaining polyprotein is then targeted to the host endoplasmic reticulum, where host signal peptidase cleaves it into pE2, 6K and E1 proteins. pE2 is further processed to mature E3 and E2 by host furin in trans-Golgi vesicle. Post-translationally, palmitoylated via thioester bonds. These palmitoylations may induce disruption of the C-terminus transmembrane. This would result in the reorientation of E2 C-terminus from lumenal to cytoplasmic side. N-glycosylated. In terms of processing, palmitoylated via thioester bonds.

The protein localises to the virion. It is found in the host cytoplasm. It localises to the host cell membrane. Its subcellular location is the virion membrane. The protein resides in the host Golgi apparatus. The protein localises to the host trans-Golgi network. It is found in the host endoplasmic reticulum. It carries out the reaction Autocatalytic release of the core protein from the N-terminus of the togavirus structural polyprotein by hydrolysis of a -Trp-|-Ser- bond.. Its function is as follows. Possesses a protease activity that results in its autocatalytic cleavage from the nascent structural protein. Following its self-cleavage, the capsid protein transiently associates with ribosomes, and within several minutes the protein binds to viral RNA and rapidly assembles into icosahedric core particles. The resulting nucleocapsid eventually associates with the cytoplasmic domain of the spike glycoprotein E2 at the cell membrane, leading to budding and formation of mature virions. In case of infection, new virions attach to target cells and after clathrin-mediated endocytosis their membrane fuses with the host endosomal membrane. This leads to the release of the nucleocapsid into the cytoplasm, followed by an uncoating event necessary for the genomic RNA to become accessible. The uncoating might be triggered by the interaction of capsid proteins with ribosomes. Binding of ribosomes would release the genomic RNA since the same region is genomic RNA-binding and ribosome-binding. Provides the signal sequence for the translocation of the precursor of protein E3/E2 to the host endoplasmic reticulum. Mediates pH protection of spike glycoprotein E1 during the transport via the secretory pathway. Functionally, plays a role in viral attachment to target host cell, by binding to the cell receptor MXRA8. Synthesized as a p62 precursor which is processed by furin at the cell membrane just before virion budding, giving rise to E2-E1 heterodimer. The p62-E1 heterodimer is stable, whereas E2-E1 is unstable and dissociate at low pH. p62 is processed at the last step, presumably to avoid E1 fusion activation before its final export to cell surface. E2 C-terminus contains a transitory transmembrane that would be disrupted by palmitoylation, resulting in reorientation of the C-terminal tail from lumenal to cytoplasmic side. This step is critical since E2 C-terminus is involved in budding by interacting with capsid proteins. This release of E2 C-terminus in cytoplasm occurs lately in protein export, and precludes premature assembly of particles at the endoplasmic reticulum membrane. In terms of biological role, acts as a viroporin that participates in virus glycoprotein processing and transport to the plasma membrane, cell permeabilization and budding of viral particles. Disrupts the calcium homeostasis of the cell, probably at the endoplasmic reticulum level. This leads to cytoplasmic calcium elevation. Because of its lipophilic properties, the 6K protein is postulated to influence the selection of lipids that interact with the transmembrane domains of the glycoproteins, which, in turn, affects the deformability of the bilayer required for the extreme curvature that occurs as budding proceeds. Present in low amount in virions, about 3% compared to viral glycoproteins. Its function is as follows. Class II viral fusion protein. Fusion activity is inactive as long as E1 is bound to E2 in mature virion. After virus attachment to target cell via host MXRA8 and endocytosis, acidification of the endosome induce dissociation of E1/E2 heterodimer and concomitant trimerization of the E1 subunits. This E1 trimer is fusion active, and promotes release of viral nucleocapsid in cytoplasm after endosome and viral membrane fusion. Efficient fusion requires the presence of cholesterol and sphingolipid in the target membrane. The protein is Structural polyprotein of O'nyong-nyong virus (strain SG650) (ONNV).